A 610-amino-acid polypeptide reads, in one-letter code: Calcium-dependent protein kinase 1 (610 aa).

Residue G2 is the site of N-myristoyl glycine attachment. C5 carries the S-palmitoyl cysteine lipid modification. The tract at residues 17–133 (VSAAMWRPRD…HMKRVSSAGL (117 aa)) is disordered. 2 stretches are compositionally biased toward basic and acidic residues: residues 47-56 (LRSRLSDEVQ) and 70-117 (TDVE…DPPA). Residues 118-127 (KPKKPKHMKR) are compositionally biased toward basic residues. A Protein kinase domain is found at 150-408 (YSLGRKLGQG…AHQVLCHPWV (259 aa)). ATP is bound by residues 156 to 164 (LGQGQFGTT) and K179. D274 serves as the catalytic Proton acceptor. S314 is modified (phosphoserine). Positions 414–444 (APDKPLDSAVLSRMKQFSAMNKFKKMALRVI) are autoinhibitory domain. 4 consecutive EF-hand domains span residues 451–486 (EEIA…VGAN), 487–522 (LKES…LNKI), 523–558 (ERED…FGVE), and 559–592 (DVRI…GSIT). Ca(2+) contacts are provided by D464, D466, S468, Q470, E475, D500, D502, S504, T506, E511, D536, D538, S540, Y542, E547, D570, D572, D574, R576, and E581.

This sequence belongs to the protein kinase superfamily. Ser/Thr protein kinase family. CDPK subfamily. In terms of assembly, interacts with 14-3-3 proteins.

The protein localises to the peroxisome membrane. The enzyme catalyses L-seryl-[protein] + ATP = O-phospho-L-seryl-[protein] + ADP + H(+). It catalyses the reaction L-threonyl-[protein] + ATP = O-phospho-L-threonyl-[protein] + ADP + H(+). Activated by calcium. Autophosphorylation may play an important role in the regulation of the kinase activity. Its function is as follows. May play a role in signal transduction pathways that involve calcium as a second messenger. Phosphorylates the Ca(2+)-ATPase ACA2 resulting in the inhibition of its calcium activation. The sequence is that of Calcium-dependent protein kinase 1 (CPK1) from Arabidopsis thaliana (Mouse-ear cress).